The sequence spans 314 residues: Nodulation protein D 1 (314 aa).

The region spanning 6–63 (LDLNLLVALDALMTERNLTAAARSINLSQPAMSAAVGRLRTYFNDDLFTMVGRELVPT) is the HTH lysR-type domain. Positions 23 to 42 (LTAAARSINLSQPAMSAAVG) form a DNA-binding region, H-T-H motif.

This sequence belongs to the LysR transcriptional regulatory family.

In terms of biological role, nodD regulates the expression of the nodABCFE genes which encode other nodulation proteins. NodD is also a negative regulator of its own expression. Binds flavonoids as inducers. The sequence is that of Nodulation protein D 1 (nodD1) from Rhizobium leguminosarum bv. phaseoli.